Reading from the N-terminus, the 240-residue chain is Sulfite dehydrogenase subunit B (240 aa).

4Fe-4S ferredoxin-type domains are found at residues 4–34 (LALV…WAGP), 64–95 (TETV…KRPD), and 97–126 (GVVL…LDAQ). [4Fe-4S] cluster-binding residues include cysteine 13, cysteine 16, cysteine 19, cysteine 23, cysteine 73, cysteine 76, cysteine 81, cysteine 85, cysteine 106, cysteine 109, cysteine 112, and cysteine 116.

As to quaternary structure, forms a heterotrimeric membrane-bound complex composed of a catalytic heterodimer (SoeAB) and a membrane anchor protein (SoeC). [4Fe-4S] cluster is required as a cofactor.

The protein resides in the cell inner membrane. In terms of biological role, part of the SoeABC complex that catalyzes the oxidation of sulfite to sulfate. SoeB is probably the electron transfer subunit. In Allochromatium vinosum (strain ATCC 17899 / DSM 180 / NBRC 103801 / NCIMB 10441 / D) (Chromatium vinosum), this protein is Sulfite dehydrogenase subunit B.